We begin with the raw amino-acid sequence, 814 residues long: Microbial collagenase (814 aa).

Residues 1–21 (MELKILSVAIATTLTSTGVFA) form the signal peptide. A propeptide spanning residues 22 to 75 (LSEPVSQVTEQHAHSAHTHGVEFNRVEYQPTATLPIQPSKATRVQSLESLDESS) is cleaved from the precursor. Residue H477 coordinates Zn(2+). E478 is a catalytic residue. H481 is a Zn(2+) binding site. Positions 609–697 (APNAVITANS…VVISALGGND (89 aa)) constitute a PKD domain.

The protein belongs to the peptidase M9A family. Zn(2+) is required as a cofactor. In terms of processing, proteolytic cleavage might yield three different active forms.

The protein resides in the secreted. The enzyme catalyses Digestion of native collagen in the triple helical region at Xaa-|-Gly bonds. With synthetic peptides, a preference is shown for Gly at P3 and P1', Pro and Ala at P2 and P2', and hydroxyproline, Ala or Arg at P3'.. The polypeptide is Microbial collagenase (Vibrio alginolyticus).